The sequence spans 941 residues: Pre-mRNA-processing factor 6 (941 aa).

The disordered stretch occupies residues 1–79; that stretch reads MNKKKKPFLG…DEDLNDTNYD (79 aa). Basic and acidic residues predominate over residues 39–65; that stretch reads DANDPVDDRHAPPGKRTVGDQMKKNQA. A compositionally biased stretch (acidic residues) spans 66–78; that stretch reads ADDDDEDLNDTNY. At Ser-143 the chain carries Phosphoserine. Thr-180, Thr-266, and Thr-275 each carry phosphothreonine. Residue Ser-279 is modified to Phosphoserine. 9 HAT repeats span residues 384-416, 418-444, 445-476, 554-586, 588-620, 622-654, 689-721, 723-755, and 855-887; these read TDIR…LEEP, DARI…ARLE, TYEN…LEEA, NALE…FEKN, GTRE…SKWL, GDVP…LESE, GNIS…IEEQ, ELME…LEEK, and RKIT…FELQ.

As to quaternary structure, identified in the spliceosome B complex. Identified in the spliceosome C complex. Associates with the U5 snRNP particle. Component of the U4/U6-U5 tri-snRNP complex composed of the U4, U6 and U5 snRNAs and at least PRPF3, PRPF4, PRPF6, PRPF8, PRPF31, SNRNP200, TXNL4A, SNRNP40, DDX23, CD2BP2, PPIH, SNU13, EFTUD2, SART1 and USP39, LSm proteins LSm2-8 and Sm proteins. Interacts with ARAF1. Interacts with AR and NR3C1, but not ESR1, independently of the presence of hormones. Interacts with USH1G. Post-translationally, phosphorylated by PRP4K during spliceosome assembly.

The protein resides in the nucleus. It is found in the nucleoplasm. The protein localises to the nucleus speckle. Its function is as follows. Involved in pre-mRNA splicing as component of the U4/U6-U5 tri-snRNP complex, one of the building blocks of the spliceosome. Enhances dihydrotestosterone-induced transactivation activity of AR, as well as dexamethasone-induced transactivation activity of NR3C1, but does not affect estrogen-induced transactivation. In Mus musculus (Mouse), this protein is Pre-mRNA-processing factor 6 (Prpf6).